A 287-amino-acid polypeptide reads, in one-letter code: Ribonuclease Z (287 aa).

Positions 64, 66, 68, 69, 124, 191, and 250 each coordinate Zn(2+). The Proton acceptor role is filled by Asp68.

The protein belongs to the RNase Z family. As to quaternary structure, homodimer. Zn(2+) is required as a cofactor.

It carries out the reaction Endonucleolytic cleavage of RNA, removing extra 3' nucleotides from tRNA precursor, generating 3' termini of tRNAs. A 3'-hydroxy group is left at the tRNA terminus and a 5'-phosphoryl group is left at the trailer molecule.. Its function is as follows. Zinc phosphodiesterase, which displays some tRNA 3'-processing endonuclease activity. Probably involved in tRNA maturation, by removing a 3'-trailer from precursor tRNA. This Pyrobaculum arsenaticum (strain DSM 13514 / JCM 11321 / PZ6) protein is Ribonuclease Z.